Reading from the N-terminus, the 279-residue chain is Membrane protein insertase YidC (279 aa).

An N-terminal signal peptide occupies residues Met1–Ala22. Cys23 carries the N-palmitoyl cysteine lipid modification. Residue Cys23 is the site of S-diacylglycerol cysteine attachment. 5 helical membrane passes run Ile35–Phe55, Tyr59–Ile79, Met129–Val149, Pro170–Met190, and Pro210–Val230. A compositionally biased stretch (basic and acidic residues) spans Glu253–Lys268. Residues Glu253–Lys279 are disordered. The segment covering Ala269–Lys279 has biased composition (basic residues).

It belongs to the OXA1/ALB3/YidC family. Type 2 subfamily.

The protein localises to the cell membrane. In terms of biological role, required for the insertion and/or proper folding and/or complex formation of integral membrane proteins into the membrane. Involved in integration of membrane proteins that insert both dependently and independently of the Sec translocase complex, as well as at least some lipoproteins. The polypeptide is Membrane protein insertase YidC (Pediococcus pentosaceus (strain ATCC 25745 / CCUG 21536 / LMG 10740 / 183-1w)).